A 161-amino-acid polypeptide reads, in one-letter code: Cyclic pyranopterin monophosphate synthase (161 aa).

Substrate-binding positions include 75–77 (LCH) and 113–114 (ME). Residue Asp128 is part of the active site.

Belongs to the MoaC family. As to quaternary structure, homohexamer; trimer of dimers.

The catalysed reaction is (8S)-3',8-cyclo-7,8-dihydroguanosine 5'-triphosphate = cyclic pyranopterin phosphate + diphosphate. Its pathway is cofactor biosynthesis; molybdopterin biosynthesis. In terms of biological role, catalyzes the conversion of (8S)-3',8-cyclo-7,8-dihydroguanosine 5'-triphosphate to cyclic pyranopterin monophosphate (cPMP). The polypeptide is Cyclic pyranopterin monophosphate synthase (Salmonella typhi).